A 349-amino-acid chain; its full sequence is Protein Wnt-7a (349 aa).

The first 31 residues, 1 to 31 (MNRKARRCLGHLFLSLGMVYLRIGGFSSVVA), serve as a signal peptide directing secretion. 5 cysteine pairs are disulfide-bonded: C73-C84, C123-C131, C133-C152, C200-C214, and C202-C209. Residues N83 and N127 are each glycosylated (N-linked (GlcNAc...) asparagine). S206 carries O-palmitoleoyl serine; by PORCN lipidation. A disordered linker region spans residues 238 to 266 (VEPVRASRNKRPTFLKIKKPLSYRKPMDT). Cystine bridges form between C278/C309, C294/C304, C308/C348, C324/C339, C326/C336, and C331/C332. A glycan (N-linked (GlcNAc...) asparagine) is linked at N295.

The protein belongs to the Wnt family. As to quaternary structure, forms a soluble 1:1 complex with AFM; this prevents oligomerization and is required for prolonged biological activity. The complex with AFM may represent the physiological form in body fluids. Interacts with PORCN. Interacts (via intrinsically disordered linker region) with RECK; interaction with RECK confers ligand selectivity for Wnt7 in brain endothelial cells and allows these cells to selectively respond to Wnt7. Interacts with FZD5. In terms of processing, palmitoleoylation is required for efficient binding to frizzled receptors. Depalmitoleoylation leads to Wnt signaling pathway inhibition.

The protein localises to the secreted. The protein resides in the extracellular space. It localises to the extracellular matrix. Ligand for members of the frizzled family of seven transmembrane receptors that functions in the canonical Wnt/beta-catenin signaling pathway. Plays an important role in embryonic development, including dorsal versus ventral patterning during limb development, skeleton development and urogenital tract development. Required for central nervous system (CNS) angiogenesis and blood-brain barrier regulation. Required for normal, sexually dimorphic development of the Mullerian ducts, and for normal fertility in both sexes. Required for normal neural stem cell proliferation in the hippocampus dentate gyrus. Required for normal progress through the cell cycle in neural progenitor cells, for self-renewal of neural stem cells, and for normal neuronal differentiation and maturation. Promotes formation of synapses via its interaction with FZD5. This Pongo pygmaeus (Bornean orangutan) protein is Protein Wnt-7a (WNT7A).